An 88-amino-acid polypeptide reads, in one-letter code: Apolipoprotein C-I (88 aa).

An N-terminal signal peptide occupies residues 1-26; it reads MRLLLSLPVLLVALSVVLERPAPAQA.

Belongs to the apolipoprotein C1 family.

It localises to the secreted. Functionally, inhibitor of lipoprotein binding to the low density lipoprotein (LDL) receptor, LDL receptor-related protein, and very low density lipoprotein (VLDL) receptor. Associates with high density lipoproteins (HDL) and the triacylglycerol-rich lipoproteins in the plasma and makes up about 10% of the protein of the VLDL and 2% of that of HDL. Appears to interfere directly with fatty acid uptake and is also the major plasma inhibitor of cholesteryl ester transfer protein (CETP). Binds free fatty acids and reduces their intracellular esterification. Modulates the interaction of APOE with beta-migrating VLDL and inhibits binding of beta-VLDL to the LDL receptor-related protein. The sequence is that of Apolipoprotein C-I (APOC1) from Tupaia glis (Common tree shrew).